Here is a 127-residue protein sequence, read N- to C-terminus: Fatty acid binding protein 1-A, liver (127 aa).

The protein belongs to the calycin superfamily. Fatty-acid binding protein (FABP) family. As to expression, in adults, weakly expressed in the intestine.

It localises to the cytoplasm. Binds free fatty acids and their coenzyme A derivatives, bilirubin, and some other small molecules in the cytoplasm. May be involved in intracellular lipid transport. In Danio rerio (Zebrafish), this protein is Fatty acid binding protein 1-A, liver.